The following is a 151-amino-acid chain: UPF0178 protein Swoo_1444 (151 aa).

It belongs to the UPF0178 family.

The protein is UPF0178 protein Swoo_1444 of Shewanella woodyi (strain ATCC 51908 / MS32).